The chain runs to 468 residues: ATP synthase subunit beta (468 aa).

155 to 162 (GGAGVGKT) lines the ATP pocket.

The protein belongs to the ATPase alpha/beta chains family. In terms of assembly, F-type ATPases have 2 components, CF(1) - the catalytic core - and CF(0) - the membrane proton channel. CF(1) has five subunits: alpha(3), beta(3), gamma(1), delta(1), epsilon(1). CF(0) has three main subunits: a(1), b(2) and c(9-12). The alpha and beta chains form an alternating ring which encloses part of the gamma chain. CF(1) is attached to CF(0) by a central stalk formed by the gamma and epsilon chains, while a peripheral stalk is formed by the delta and b chains.

Its subcellular location is the cell membrane. It catalyses the reaction ATP + H2O + 4 H(+)(in) = ADP + phosphate + 5 H(+)(out). Its function is as follows. Produces ATP from ADP in the presence of a proton gradient across the membrane. The catalytic sites are hosted primarily by the beta subunits. The sequence is that of ATP synthase subunit beta from Streptococcus mutans serotype c (strain ATCC 700610 / UA159).